The primary structure comprises 355 residues: UDP-N-acetylglucosamine--N-acetylmuramyl-(pentapeptide) pyrophosphoryl-undecaprenol N-acetylglucosamine transferase (355 aa).

Residues 7-9 (TGG), Asn119, Arg159, Ser187, Ile241, and Gln286 each bind UDP-N-acetyl-alpha-D-glucosamine.

It belongs to the glycosyltransferase 28 family. MurG subfamily.

The protein localises to the cell inner membrane. It carries out the reaction di-trans,octa-cis-undecaprenyl diphospho-N-acetyl-alpha-D-muramoyl-L-alanyl-D-glutamyl-meso-2,6-diaminopimeloyl-D-alanyl-D-alanine + UDP-N-acetyl-alpha-D-glucosamine = di-trans,octa-cis-undecaprenyl diphospho-[N-acetyl-alpha-D-glucosaminyl-(1-&gt;4)]-N-acetyl-alpha-D-muramoyl-L-alanyl-D-glutamyl-meso-2,6-diaminopimeloyl-D-alanyl-D-alanine + UDP + H(+). Its pathway is cell wall biogenesis; peptidoglycan biosynthesis. Cell wall formation. Catalyzes the transfer of a GlcNAc subunit on undecaprenyl-pyrophosphoryl-MurNAc-pentapeptide (lipid intermediate I) to form undecaprenyl-pyrophosphoryl-MurNAc-(pentapeptide)GlcNAc (lipid intermediate II). The protein is UDP-N-acetylglucosamine--N-acetylmuramyl-(pentapeptide) pyrophosphoryl-undecaprenol N-acetylglucosamine transferase of Nitrosomonas eutropha (strain DSM 101675 / C91 / Nm57).